Here is a 968-residue protein sequence, read N- to C-terminus: RNA polymerase-associated protein RapA (968 aa).

Residues 164–334 (EVGQRHAPRV…FARLRLLDPN (171 aa)) enclose the Helicase ATP-binding domain. Residue 177-184 (DEVGLGKT) participates in ATP binding. The DEAH box signature appears at 280 to 283 (DEAH). The Helicase C-terminal domain maps to 490–664 (RVEWLLNYLV…AAPTEQEGLD (175 aa)).

Belongs to the SNF2/RAD54 helicase family. RapA subfamily. As to quaternary structure, interacts with the RNAP. Has a higher affinity for the core RNAP than for the holoenzyme. Its ATPase activity is stimulated by binding to RNAP.

Its function is as follows. Transcription regulator that activates transcription by stimulating RNA polymerase (RNAP) recycling in case of stress conditions such as supercoiled DNA or high salt concentrations. Probably acts by releasing the RNAP, when it is trapped or immobilized on tightly supercoiled DNA. Does not activate transcription on linear DNA. Probably not involved in DNA repair. This Serratia proteamaculans (strain 568) protein is RNA polymerase-associated protein RapA.